Here is a 227-residue protein sequence, read N- to C-terminus: Pyridoxine/pyridoxamine 5'-phosphate oxidase (227 aa).

Substrate contacts are provided by residues 23 to 26 (RREY) and Lys81. FMN is bound by residues 76-81 (RIVLLK), 91-92 (YT), Arg97, Lys98, and Gln120. Tyr138, Arg142, and Ser146 together coordinate substrate. FMN contacts are provided by residues 155–156 (QS) and Trp200. Residue 206–208 (RLH) participates in substrate binding. FMN is bound at residue Arg210.

This sequence belongs to the pyridoxamine 5'-phosphate oxidase family. In terms of assembly, homodimer. The cofactor is FMN.

The enzyme catalyses pyridoxamine 5'-phosphate + O2 + H2O = pyridoxal 5'-phosphate + H2O2 + NH4(+). It catalyses the reaction pyridoxine 5'-phosphate + O2 = pyridoxal 5'-phosphate + H2O2. The protein operates within cofactor metabolism; pyridoxal 5'-phosphate salvage; pyridoxal 5'-phosphate from pyridoxamine 5'-phosphate: step 1/1. Its pathway is cofactor metabolism; pyridoxal 5'-phosphate salvage; pyridoxal 5'-phosphate from pyridoxine 5'-phosphate: step 1/1. Functionally, catalyzes the oxidation of either pyridoxine 5'-phosphate (PNP) or pyridoxamine 5'-phosphate (PMP) into pyridoxal 5'-phosphate (PLP). This chain is Pyridoxine/pyridoxamine 5'-phosphate oxidase, found in Pectobacterium atrosepticum (strain SCRI 1043 / ATCC BAA-672) (Erwinia carotovora subsp. atroseptica).